Here is a 282-residue protein sequence, read N- to C-terminus: Probable ribosomal RNA small subunit methyltransferase A (282 aa).

S-adenosyl-L-methionine contacts are provided by His-24, Leu-26, Gly-51, Glu-72, Asp-100, and Asn-115.

This sequence belongs to the class I-like SAM-binding methyltransferase superfamily. rRNA adenine N(6)-methyltransferase family. RsmA subfamily.

The protein localises to the cytoplasm. Functionally, specifically dimethylates two adjacent adenosines in the loop of a conserved hairpin near the 3'-end of 16S rRNA in the 30S particle. May play a critical role in biogenesis of 30S subunits. The chain is Probable ribosomal RNA small subunit methyltransferase A from Halobacterium salinarum (strain ATCC 29341 / DSM 671 / R1).